Reading from the N-terminus, the 943-residue chain is Netrin receptor UNC5B-a (943 aa).

An N-terminal signal peptide occupies residues 1–30 (MYLSRNPSGAALAAILVALILSCNFPSSTA). Topologically, residues 31–380 (GIEYSDVLPD…LESTGDVALY (350 aa)) are extracellular. The Ig-like domain occupies 51-148 (PHFLLEPEDA…AGTTKSKRSY (98 aa)). Intrachain disulfides connect Cys-72/Cys-133, Cys-84/Cys-131, Cys-177/Cys-228, Cys-261/Cys-298, Cys-265/Cys-302, Cys-276/Cys-288, Cys-317/Cys-351, Cys-321/Cys-356, and Cys-329/Cys-341. An Ig-like C2-type domain is found at 150-245 (RIAYLRKNFD…KRRSTTATVI (96 aa)). An N-linked (GlcNAc...) asparagine glycan is attached at Asn-225. TSP type-1 domains lie at 249-303 (NGGW…TMCP) and 305-357 (DGGW…GLCM). A glycan (N-linked (GlcNAc...) asparagine) is linked at Asn-350. Residues 381 to 401 (AGLVVAIFIVIILLMAVGIVV) traverse the membrane as a helical segment. Topologically, residues 402 to 943 (YRRNCREFDT…MLVMATDGDC (542 aa)) are cytoplasmic. The ZU5 domain maps to 542 to 685 (NSVTGTFGSL…LGTYAFVGES (144 aa)). The interval 688-836 (RSAIKRLQLA…LEENVKSFDP (149 aa)) is UPA domain. The region spanning 863 to 941 (KICNSLDAPN…EMMLVMATDG (79 aa)) is the Death domain.

It belongs to the unc-5 family. In terms of assembly, interacts (via extracellular domain) with flrt3 (via extracellular domain). Interacts with rnd1. Post-translationally, phosphorylated on cytoplasmic tyrosine residues. As to expression, in the developing visual system, it is expressed within the developing optic vesicles and later become restricted to the dorsal ciliary marginal zone, a site of retinoblast proliferation and differentiation.

The protein resides in the cell membrane. Functionally, plays a role in cell-cell adhesion during embryonic development. Receptor for netrin required for axon guidance. Mediates axon repulsion of neuronal growth cones in the developing nervous system upon ligand binding. The polypeptide is Netrin receptor UNC5B-a (unc5b-a) (Xenopus laevis (African clawed frog)).